The sequence spans 425 residues: Serine/threonine transporter SstT (425 aa).

9 helical membrane passes run 11-31 (FLNG…LILA), 43-63 (FLGS…VFVL), 91-111 (LFAA…LVLV), 141-161 (ALVS…GFAL), 182-202 (IVHL…AGTI), 216-236 (LLAV…PIIV), 290-310 (IPLG…VLTL), 316-336 (LGIE…AVSA), and 363-383 (VAMQ…SAET).

Belongs to the dicarboxylate/amino acid:cation symporter (DAACS) (TC 2.A.23) family.

It localises to the cell inner membrane. It carries out the reaction L-serine(in) + Na(+)(in) = L-serine(out) + Na(+)(out). It catalyses the reaction L-threonine(in) + Na(+)(in) = L-threonine(out) + Na(+)(out). In terms of biological role, involved in the import of serine and threonine into the cell, with the concomitant import of sodium (symport system). In Psychromonas ingrahamii (strain DSM 17664 / CCUG 51855 / 37), this protein is Serine/threonine transporter SstT.